The following is a 256-amino-acid chain: E3 ubiquitin-protein ligase MIR2 (256 aa).

Over 1–83 the chain is Cytoplasmic; sequence MASKDVEEGV…NLWPEMERQE (83 aa). An RING-CH-type zinc finger spans residues 7 to 66; that stretch reads EEGVEGPICWICREEVGNEGIHPCACTGELDVVHPQCLSTWLTVSRNTACQMCRVIYRTR. The Zn(2+) site is built by Cys15, Cys18, Cys30, Cys32, His40, Cys43, Cys56, and Cys59. The helical transmembrane segment at 84 to 104 threads the bilayer; that stretch reads IFELFLLMSVVVAGLVGVALC. The Extracellular portion of the chain corresponds to 105–124; sequence TWTLLVILTAPAGTFSPGAV. A helical membrane pass occupies residues 125 to 145; sequence LGFLCFFGFYQIFIVFAFGGI. The Cytoplasmic portion of the chain corresponds to 146-256; sequence CRVSGTVRAL…VRKNHPKNNG (111 aa). Residues 179-256 form a disordered region; it reads DNIELTVLVG…VRKNHPKNNG (78 aa). A compositionally biased stretch (acidic residues) spans 193–203; sequence TDEEPTDESSE. A compositionally biased stretch (basic residues) spans 245–256; that stretch reads KPVRKNHPKNNG.

As to quaternary structure, binds human MHC-I, CD86, ICAM1 and CD1D.

It is found in the host cell membrane. It localises to the host endoplasmic reticulum. The enzyme catalyses S-ubiquitinyl-[E2 ubiquitin-conjugating enzyme]-L-cysteine + [acceptor protein]-L-lysine = [E2 ubiquitin-conjugating enzyme]-L-cysteine + N(6)-ubiquitinyl-[acceptor protein]-L-lysine.. It functions in the pathway protein modification; protein ubiquitination. Membrane-bound E3 ubiquitin ligase expressed at the immediate early stage of viral reactivation to mediate polyubiquitination of various host membrane proteins related to the immune response. Promotes ubiquitination and subsequent degradation of host MHC-I, CD86, DC-SIGN and DC-SIGNR, ICAM1 and CD1D molecules, presumably to prevent lysis of infected cells by cytotoxic T-lymphocytes and NK cell. Plays a role in the down-regulation of the host stress-induced NKG2D ligands MICA, MICB and CLEC2B, which enable immune cells expressing the NKG2D receptor to recognize and annihilate infected cells prior to viral spread. Alters monocyte metabolism and proliferation by mediating rapid internalization of cellular growth factor-binding receptor tyrosine kinases from the surface leading to increased signaling. This chain is E3 ubiquitin-protein ligase MIR2 (K5), found in Homo sapiens (Human).